Here is a 570-residue protein sequence, read N- to C-terminus: MSEKHPGPLVVEGKLSDAERMKLESNYLRGTIAEDLNDGLTGGFKGDNFLLIRFHGMYQQDDRDIRAERAAQKLEPRHAMLLRCRLPGGVITTTQWQAIDKFAADNTIYGSIRLTNRQTFQFHGILKKNVKPVHQMLHSVGLDALATANDMNRNVLCTSNPYESQLHAEAYEWAKKISEHLLPRTRAYAEIWLDQEKVATTDEEPILGATYLPRKFKTTVVIPPQNDIDLHANDMNFVAIAENGKLVGFNLLVGGGLSIEHGNKKTYARTASEFGYLPLEHTLAVAEAVVTTQRDWGNRTDRKNAKTKYTLERVGVDTFKEEVERRAGIKFEPIRPYEFTGRGDRIGWVKGIDDKWHLTLFIENGRILDYPGRPLKTGLLEIAKIHQGEFRITANQNLIIASVPESQKAKIETLARDHGLMNAVSAQRENSMACVSFPTCPLAMAEAERFLPSFTDKVEAILEKHGIPDEHIVMRVTGCPNGCGRAMLAEIGLVGKAPGRYNLHLGGNRIGSRIPRMYKENITEPDILASLDELIGRWAKEREAGEGFGDFTVRAGIIRPVLDPARDFWE.

4 residues coordinate [4Fe-4S] cluster: Cys434, Cys440, Cys479, and Cys483. Cys483 contributes to the siroheme binding site.

This sequence belongs to the nitrite and sulfite reductase 4Fe-4S domain family. Alpha(8)-beta(8). The alpha component is a flavoprotein, the beta component is a hemoprotein. Siroheme is required as a cofactor. It depends on [4Fe-4S] cluster as a cofactor.

It catalyses the reaction hydrogen sulfide + 3 NADP(+) + 3 H2O = sulfite + 3 NADPH + 4 H(+). Its pathway is sulfur metabolism; hydrogen sulfide biosynthesis; hydrogen sulfide from sulfite (NADPH route): step 1/1. In terms of biological role, component of the sulfite reductase complex that catalyzes the 6-electron reduction of sulfite to sulfide. This is one of several activities required for the biosynthesis of L-cysteine from sulfate. This chain is Sulfite reductase [NADPH] hemoprotein beta-component, found in Salmonella newport (strain SL254).